Consider the following 247-residue polypeptide: ATP synthase subunit a, plastid (247 aa).

5 helical membrane-spanning segments follow: residues 33–53 (FLVH…LLGS), 95–115 (VPFI…GALL), 134–154 (INTT…AGIL), 199–219 (LVVV…VMLL), and 220–240 (GLFT…AYIG).

It belongs to the ATPase A chain family. F-type ATPases have 2 components, CF(1) - the catalytic core - and CF(0) - the membrane proton channel. CF(1) has five subunits: alpha(3), beta(3), gamma(1), delta(1), epsilon(1). CF(0) has four main subunits: a, b, b' and c.

The protein resides in the plastid membrane. Its function is as follows. Key component of the proton channel; it plays a direct role in the translocation of protons across the membrane. This chain is ATP synthase subunit a, plastid, found in Cuscuta exaltata (Tall dodder).